We begin with the raw amino-acid sequence, 156 residues long: ATP synthase subunit b (156 aa).

A helical transmembrane segment spans residues 7–29 (LLGQAIAFALFVWFCMKYVWPPI).

It belongs to the ATPase B chain family. In terms of assembly, F-type ATPases have 2 components, F(1) - the catalytic core - and F(0) - the membrane proton channel. F(1) has five subunits: alpha(3), beta(3), gamma(1), delta(1), epsilon(1). F(0) has three main subunits: a(1), b(2) and c(10-14). The alpha and beta chains form an alternating ring which encloses part of the gamma chain. F(1) is attached to F(0) by a central stalk formed by the gamma and epsilon chains, while a peripheral stalk is formed by the delta and b chains.

The protein resides in the cell inner membrane. Functionally, f(1)F(0) ATP synthase produces ATP from ADP in the presence of a proton or sodium gradient. F-type ATPases consist of two structural domains, F(1) containing the extramembraneous catalytic core and F(0) containing the membrane proton channel, linked together by a central stalk and a peripheral stalk. During catalysis, ATP synthesis in the catalytic domain of F(1) is coupled via a rotary mechanism of the central stalk subunits to proton translocation. Component of the F(0) channel, it forms part of the peripheral stalk, linking F(1) to F(0). The polypeptide is ATP synthase subunit b (Aliivibrio salmonicida (strain LFI1238) (Vibrio salmonicida (strain LFI1238))).